The following is a 103-amino-acid chain: Large ribosomal subunit protein bL21 (103 aa).

It belongs to the bacterial ribosomal protein bL21 family. Part of the 50S ribosomal subunit. Contacts protein L20.

This protein binds to 23S rRNA in the presence of protein L20. This is Large ribosomal subunit protein bL21 from Tolumonas auensis (strain DSM 9187 / NBRC 110442 / TA 4).